The sequence spans 167 residues: Protein tyrosine phosphatase type IVA 2 (167 aa).

The 154-residue stretch at 5 to 158 folds into the Tyrosine-protein phosphatase domain; it reads APVEISYENM…YRPKMRLRFR (154 aa). C46 and C101 are disulfide-bonded. The Proton donor role is filled by D69. C101 functions as the Phosphocysteine intermediate in the catalytic mechanism. 102–107 is a phosphate binding site; it reads VAGLGR. R107 is a binding site for substrate. Position 164 is a cysteine methyl ester (C164). C164 carries the S-farnesyl cysteine lipid modification. The propeptide at 165–167 is removed in mature form; that stretch reads CVQ.

Belongs to the protein-tyrosine phosphatase family. In terms of assembly, in contrast to PTP4A1 and PTP4A3, does not interact with tubulin. Interacts with RABGGTB. Farnesylated. Farnesylation is required for membrane targeting and for interaction with RABGGTB. In terms of tissue distribution, expressed in skeletal muscle, and at lower levels in liver, lung, heart, kidney, brain, testis and spleen.

It localises to the cell membrane. The protein resides in the early endosome. Its subcellular location is the cytoplasm. It catalyses the reaction O-phospho-L-tyrosyl-[protein] + H2O = L-tyrosyl-[protein] + phosphate. Its activity is regulated as follows. Inhibited by sodium orthovanadate and pentamidine. Its function is as follows. Protein tyrosine phosphatase which stimulates progression from G1 into S phase during mitosis. Inhibits geranylgeranyl transferase type II activity by blocking the association between RABGGTA and RABGGTB. This Mus musculus (Mouse) protein is Protein tyrosine phosphatase type IVA 2 (Ptp4a2).